A 271-amino-acid polypeptide reads, in one-letter code: Glutamate racemase (271 aa).

Residues 12 to 13 (DS) and 44 to 45 (YG) each bind substrate. The active-site Proton donor/acceptor is cysteine 75. Substrate is bound at residue 76–77 (NS). Cysteine 185 functions as the Proton donor/acceptor in the catalytic mechanism. Position 186-187 (186-187 (TH)) interacts with substrate.

This sequence belongs to the aspartate/glutamate racemases family.

It carries out the reaction L-glutamate = D-glutamate. It functions in the pathway cell wall biogenesis; peptidoglycan biosynthesis. Its function is as follows. Provides the (R)-glutamate required for cell wall biosynthesis. This is Glutamate racemase from Mycobacterium bovis (strain BCG / Pasteur 1173P2).